Reading from the N-terminus, the 608-residue chain is Sensor protein kinase WalK (608 aa).

The next 2 helical transmembrane spans lie at 14 to 34 and 183 to 203; these read LVIV…LYFT and IFIV…FFIA. The 53-residue stretch at 204–256 folds into the HAMP domain; the sequence is RTITKPITDMRNQTVEMSRGNYTQRVKIYGNDEIGELALAFNNLSKRVQEAQA. Residues 261 to 331 enclose the PAS domain; the sequence is EKRRLDSVIT…EIQENNDSFL (71 aa). 4 residues coordinate Zn(2+): histidine 271, aspartate 274, histidine 364, and glutamate 368. The PAC domain maps to 314 to 378; sequence LEDEFKLEEI…QQQVERERRE (65 aa). Positions 382–600 constitute a Histidine kinase domain; the sequence is NVSHELRTPL…SIFITLPCEV (219 aa). Histidine 385 carries the phosphohistidine; by autocatalysis modification.

Forms homodimers. Forms homooligomers. Autophosphorylated.

Its subcellular location is the cell membrane. It catalyses the reaction ATP + protein L-histidine = ADP + protein N-phospho-L-histidine.. By zinc. Zinc-binding negatively regulates WalK kinase activity and thus autophosphorylation. In terms of biological role, member of the two-component regulatory system WalK/WalR that regulates genes involved in cell wall metabolism, virulence regulation, biofilm production, oxidative stress resistance and antibiotic resistance via direct or indirect regulation of autolysins. Functions as a sensor protein kinase which is autophosphorylated at a histidine residue in the dimerization domain and transfers its phosphate group to the conserved aspartic acid residue in the regulatory domain of WalR. In turn, WalR binds to the upstream promoter regions of the target genes to positively and negatively regulate their expression. The sequence is that of Sensor protein kinase WalK (walK) from Staphylococcus aureus (strain Mu3 / ATCC 700698).